The chain runs to 120 residues: uncharacterized protein (120 aa).

The first 22 residues, 1–22, serve as a signal peptide directing secretion; the sequence is MSTSGMLFIFATFCPCFLSCCA. Topologically, residues 23–59 are extracellular; the sequence is FMSHWKLKDFSFRFLRMCGERSLVVCYPLKLLKQIRS. Residues 60 to 80 traverse the membrane as a helical segment; the sequence is LFSIAIGHLSLMLIEGSANLL. The Cytoplasmic portion of the chain corresponds to 81–120; the sequence is SLEEISRTLLRILDFVGNKNMRTYLEVPLCRWHISQARPN.

Its subcellular location is the membrane. This is an uncharacterized protein from Schizosaccharomyces pombe (strain 972 / ATCC 24843) (Fission yeast).